The primary structure comprises 1395 residues: MNLDEFSDFNIDQLLGPSAPLQDALVAPYKQVSLPRSNQDVYAKRSRLAERIAQNDELIRQVKQLQAQNKQLADLQRTAQEVTDLYQKEKQQRIELEKRTKQIGERCGQLEKELDVQVGNCENLQEQLQVRGLPVEAKDVLSILMQFSQRLGDDCGLLRRDQNIMKKLREHCKTIDVSVPTPKSPNSRSKRKAHQPGVNQSTQTDEEPADPKPALCSVAVQVEGLIETRNQATQHKNTTTTRGTTTASFIKHHDVGTCFPEPKPLPNIRQILDEMLSWRDDVVIEPMSPLSDLQQELQLEDVPTNASVATCTTLCDIHREIDFVTDLPTQIKVSASRPPSRTMLDSVKEEARSSRELAKELFNFLPQNQSCLTNLPPQAFEELWQVFGQMVLALLQRRSNPSMATPPSVSQADFTRWLYELYEGTENQTEQTSNGSTSKRDFATSTECMDTGTDPIIQSPNISHEGHVTPIRLPSKPKERKRKSKKRKAAATPKPIAKRKCLEMETNNELEVEREQTPETAIQFLSNLETFNMANCDNLEMELDEEELYLLQLTSNAKQNENKGNVRVQDPDDLKSPAQTSKFPKSENHLPAVLKETASSLKGYDEKQCPFPDKTEELMHKKTFEIQENIGSLTELPPNIDISAYPVSMAEVRIVSSNKPSEMEVNASEGTDSHLDKSVSNLDTGSMSLFGSDSDVESEYSIEQMAPELSDSDDTFDNSEEDCRSADEPSNSKKIRNSSLFGSESESDESEERALEADDLTEAEAKVEEKESEQKSSDVAPAASSGKLLVVEADLVTKTQPLFVEKLDLENTQHTSTCTNPKETDESEDEHGLVIDEQIFISQPEEPPLTVPIAAKRRRTQSELKTLSPPGEVRLTRQRAKQLLDEQKSGPEKGLSLVEQIRRQLKKAINKSEPFKKDSTHDSKKDSTHDLKPLEHEDELKAMQLGTNFEPIKLSCSISEESPASPPACEPMDELDPPPIEIPLEQAACTRKDDQHKSIVQHVLKMDTGLEKLVEANRKTLGKSQPQLCASIGKYLQENMQLESTCSDLAMDIYKVTKSEAVIVNAMITVICKIGLDDGPVERLLNALKYLNFSQRFLAELEERLFRNTKERPATELALNYVRLYLKATALQATMSAGYENPARLLLAKILYHFDQDMPPLVMEVLRQFPTALPHREQREYDNSDALITVIKHLLMNRQYDMQDPNGAERLLLSKLRFEYHFQPYEPSKQQVLENLVGKLKAGREEELGYAFALFCRRSPHLKVVESVVGEHLMPLATSYCDLAAQNELYDARLGLLLHCISLVLKPLPLDTDISAFVGFLKRLLVAVPRSGVQLAAVKASLRLQRFGFKYTLDALKDYRPNYELDPLTRAMIRCFAKRRRHFRHVAATGRRTEI.

7 disordered regions span residues 175-212, 452-496, 561-588, 658-680, 707-786, 841-872, and 908-936; these read IDVS…ADPK, GTDP…PKPI, ENKG…KSEN, NKPS…KSVS, PELS…ASSG, ISQP…PPGE, and AINK…PLEH. Residues 478 to 489 are compositionally biased toward basic residues; it reads KERKRKSKKRKA. Residues 710 to 720 show a composition bias toward acidic residues; it reads SDSDDTFDNSE. Basic and acidic residues predominate over residues 721–731; the sequence is EDCRSADEPSN. Residues 745–762 show a composition bias toward acidic residues; sequence SESDESEERALEADDLTE. A coiled-coil region spans residues 748–778; sequence DESEERALEADDLTEAEAKVEEKESEQKSSD. Positions 763 to 776 are enriched in basic and acidic residues; sequence AEAKVEEKESEQKS. The segment covering 913 to 936 has biased composition (basic and acidic residues); sequence EPFKKDSTHDSKKDSTHDLKPLEH.

This sequence belongs to the ICE1 family. In terms of assembly, component of the little elongation complex (LEC), at least composed of Ell, Eaf, Ice1 and Ice2.

It localises to the nucleus. Its function is as follows. Component of the little elongation complex (LEC), a complex required to regulate small nuclear RNA (snRNA) gene transcription by RNA polymerase II and III. Specifically acts as a scaffold protein that promotes the LEC complex formation and recruitment and RNA polymerase II occupancy at snRNA genes in subnuclear bodies. The sequence is that of Little elongation complex subunit 1 (Ice1) from Drosophila melanogaster (Fruit fly).